The chain runs to 330 residues: (4-{4-[2-(gamma-L-glutamylamino)ethyl]phenoxymethyl}furan-2-yl)methanamine synthase (330 aa).

The protein belongs to the MfnF family.

It carries out the reaction gamma-L-glutamyltyramine + [5-(aminomethyl)furan-3-yl]methyl diphosphate = (4-{4-[2-(gamma-L-glutamylamino)ethyl]phenoxymethyl}furan-2-yl)methanamine + diphosphate. It functions in the pathway cofactor biosynthesis; methanofuran biosynthesis. Catalyzes the condensation between 5-(aminomethyl)-3-furanmethanol diphosphate (F1-PP) and gamma-glutamyltyramine to produce APMF-Glu. In Methanocaldococcus jannaschii (strain ATCC 43067 / DSM 2661 / JAL-1 / JCM 10045 / NBRC 100440) (Methanococcus jannaschii), this protein is (4-{4-[2-(gamma-L-glutamylamino)ethyl]phenoxymethyl}furan-2-yl)methanamine synthase.